The sequence spans 376 residues: MTRLLLALILVVSAASAQAAVRIKDIADIKGLRENQIVGYGLVIGLNGTGDTLRNAPFTEQSLQSMLENMGINVRNETTSTTNPARPTTLRTRNVAAVMVTADLQPSIGAGERMDVTVSSLGDATSLLGGTLVMTSLRAADGAVYAVAQGAVTVAGYSVGGQAQNVSQGTPTAGRILNGALVEREVQGSLHEMEFLVLELKNPDFVTATRILDAINRYAGGRYRAQIAFERDYRTIVLSKPRHIGPVRFLAEIGELTVEPDTPARVVINERTGTVVIGRDVRISTVAVTHGNLTVRVTEMPVVSQPAPFSRGQTVVVPQTVVEANEAGSQVAILSGVDLQRLVRGLNQIGLKPSGIIAILQAIKTAGALQADVIVQ.

The first 19 residues, 1-19 (MTRLLLALILVVSAASAQA), serve as a signal peptide directing secretion.

Belongs to the FlgI family. The basal body constitutes a major portion of the flagellar organelle and consists of four rings (L,P,S, and M) mounted on a central rod.

It localises to the periplasm. Its subcellular location is the bacterial flagellum basal body. Its function is as follows. Assembles around the rod to form the L-ring and probably protects the motor/basal body from shearing forces during rotation. The polypeptide is Flagellar P-ring protein 2 (Bradyrhizobium diazoefficiens (strain JCM 10833 / BCRC 13528 / IAM 13628 / NBRC 14792 / USDA 110)).